We begin with the raw amino-acid sequence, 201 residues long: 3-isopropylmalate dehydratase small subunit (201 aa).

This sequence belongs to the LeuD family. LeuD type 1 subfamily. As to quaternary structure, heterodimer of LeuC and LeuD.

It carries out the reaction (2R,3S)-3-isopropylmalate = (2S)-2-isopropylmalate. The protein operates within amino-acid biosynthesis; L-leucine biosynthesis; L-leucine from 3-methyl-2-oxobutanoate: step 2/4. Functionally, catalyzes the isomerization between 2-isopropylmalate and 3-isopropylmalate, via the formation of 2-isopropylmaleate. This Xanthobacter autotrophicus (strain ATCC BAA-1158 / Py2) protein is 3-isopropylmalate dehydratase small subunit.